Here is a 53-residue protein sequence, read N- to C-terminus: Large ribosomal subunit protein bL32c (53 aa).

This sequence belongs to the bacterial ribosomal protein bL32 family.

The protein resides in the plastid. Its subcellular location is the chloroplast. This chain is Large ribosomal subunit protein bL32c, found in Phaseolus vulgaris (Kidney bean).